The primary structure comprises 338 residues: Phenylalanine--tRNA ligase alpha subunit (338 aa).

E253 provides a ligand contact to Mg(2+).

It belongs to the class-II aminoacyl-tRNA synthetase family. Phe-tRNA synthetase alpha subunit type 1 subfamily. In terms of assembly, tetramer of two alpha and two beta subunits. Mg(2+) is required as a cofactor.

The protein localises to the cytoplasm. The enzyme catalyses tRNA(Phe) + L-phenylalanine + ATP = L-phenylalanyl-tRNA(Phe) + AMP + diphosphate + H(+). This is Phenylalanine--tRNA ligase alpha subunit from Geotalea daltonii (strain DSM 22248 / JCM 15807 / FRC-32) (Geobacter daltonii).